We begin with the raw amino-acid sequence, 1556 residues long: Lysine-specific demethylase 5C (1556 aa).

In terms of domain architecture, JmjN spans 14–55 (CPVFEPSWAEFRDPLGYIAKIRPIAEKSGICKIRPPADWQPP). In terms of domain architecture, ARID spans 79 to 169 (TRVKLNYLDQ…IVYPYEMYQS (91 aa)). The segment covering 197–207 (LRQSVQPSKFN) has biased composition (polar residues). The disordered stretch occupies residues 197-227 (LRQSVQPSKFNSYGRRAKRLQPDPEPTEEDI). Residues K205, K229, K244, and K274 each participate in a glycyl lysine isopeptide (Lys-Gly) (interchain with G-Cter in SUMO2) cross-link. The disordered stretch occupies residues 257–303 (LRKKDKEGPECPPTVVVKEESGGDVKVESTSPKTFLESKEELSHSPE). The span at 273-283 (VKEESGGDVKV) shows a compositional bias: basic and acidic residues. The residue at position 287 (S287) is a Phosphoserine. K295 is covalently cross-linked (Glycyl lysine isopeptide (Lys-Gly) (interchain with G-Cter in SUMO2)). 2 positions are modified to phosphoserine: S301 and S317. The PHD-type 1 zinc finger occupies 324–374 (SYVCRMCSRGDEDDKLLLCDGCDDNYHIFCLLPPLPEIPKGVWRCPKCVMA). The 167-residue stretch at 468 to 634 (EYATSGWNLN…AGRQCIEHYR (167 aa)) folds into the JmjC domain. Fe cation is bound by residues H514, D517, and H602. Residues S893 and S897 each carry the phosphoserine modification. Residue K1127 forms a Glycyl lysine isopeptide (Lys-Gly) (interchain with G-Cter in SUMO2) linkage. A PHD-type 2 zinc finger spans residues 1185-1250 (TSVCVCGQVP…KFLCPLCMRS (66 aa)). Disordered regions lie at residues 1315-1362 (LQAE…SPEK) and 1441-1556 (ERHG…QQQL). A compositionally biased stretch (basic and acidic residues) spans 1335–1345 (PLREGSGKDMP). S1359 bears the Phosphoserine mark. Basic residues predominate over residues 1445 to 1460 (SRARGRALERRRRRKV). Over residues 1461–1478 (DRGGEGDDPAREELEPKR) the composition is skewed to basic and acidic residues. Positions 1485 to 1500 (EAEEAQEEEELEEETG) are enriched in acidic residues. Composition is skewed to polar residues over residues 1513–1522 (SPSTQENQNG) and 1530–1540 (SGPSAPFSTLS). Residues 1541–1556 (PQLHVPCPQQPPQQQL) are compositionally biased toward low complexity.

It belongs to the JARID1 histone demethylase family. Part of two distinct complexes, one containing E2F6, and the other containing REST. Interacts with ZMYND8. Fe(2+) serves as cofactor.

It localises to the nucleus. It carries out the reaction N(6),N(6),N(6)-trimethyl-L-lysyl(4)-[histone H3] + 3 2-oxoglutarate + 3 O2 = L-lysyl(4)-[histone H3] + 3 formaldehyde + 3 succinate + 3 CO2. Functionally, histone demethylase that specifically demethylates 'Lys-4' of histone H3, thereby playing a central role in histone code. Does not demethylate histone H3 'Lys-9', H3 'Lys-27', H3 'Lys-36', H3 'Lys-79' or H4 'Lys-20'. Demethylates trimethylated and dimethylated but not monomethylated H3 'Lys-4'. Participates in transcriptional repression of neuronal genes by recruiting histone deacetylases and REST at neuron-restrictive silencer elements. Represses the CLOCK-BMAL1 heterodimer-mediated transcriptional activation of the core clock component PER2. This is Lysine-specific demethylase 5C (KDM5C) from Canis lupus familiaris (Dog).